The following is a 473-amino-acid chain: 3-isopropylmalate dehydratase large subunit (473 aa).

3 residues coordinate [4Fe-4S] cluster: C354, C414, and C417.

The protein belongs to the aconitase/IPM isomerase family. LeuC type 1 subfamily. As to quaternary structure, heterodimer of LeuC and LeuD. The cofactor is [4Fe-4S] cluster.

The catalysed reaction is (2R,3S)-3-isopropylmalate = (2S)-2-isopropylmalate. It participates in amino-acid biosynthesis; L-leucine biosynthesis; L-leucine from 3-methyl-2-oxobutanoate: step 2/4. Catalyzes the isomerization between 2-isopropylmalate and 3-isopropylmalate, via the formation of 2-isopropylmaleate. The protein is 3-isopropylmalate dehydratase large subunit of Mycobacterium bovis (strain ATCC BAA-935 / AF2122/97).